We begin with the raw amino-acid sequence, 188 residues long: dCTP deaminase (188 aa).

Residues 111–116 (KSTYAR), 135–137 (TLE), Gln156, Tyr170, and Gln180 contribute to the dCTP site. The active-site Proton donor/acceptor is the Glu137.

The protein belongs to the dCTP deaminase family. As to quaternary structure, homotrimer.

It carries out the reaction dCTP + H2O + H(+) = dUTP + NH4(+). It functions in the pathway pyrimidine metabolism; dUMP biosynthesis; dUMP from dCTP (dUTP route): step 1/2. In terms of biological role, catalyzes the deamination of dCTP to dUTP. The protein is dCTP deaminase of Coxiella burnetii (strain CbuK_Q154) (Coxiella burnetii (strain Q154)).